The sequence spans 147 residues: MASHRLLLLCLAGLVFVSEAGPTGAGESKCPLMVKVLDAVRGSPAVNVAVNVFKRAADETWEPFASGKTSESGELHGLTTEEEFVEGIYKVEIDTKSYWKALGISPFHEHAEVVFAANDSGPRRYTIAALLSPYSYSTTAVVTNPKE.

Positions 1–20 (MASHRLLLLCLAGLVFVSEA) are cleaved as a signal peptide. Cys30 bears the Sulfocysteine mark. Lys35 provides a ligand contact to L-thyroxine. Residue Glu62 is modified to 4-carboxyglutamate. A Phosphoserine modification is found at Ser72. Glu74 lines the L-thyroxine pocket. An N-linked (GlcNAc...) asparagine glycan is attached at Asn118. Ser137 lines the L-thyroxine pocket.

This sequence belongs to the transthyretin family. As to quaternary structure, homotetramer. Dimer of dimers. In the homotetramer, subunits assemble around a central channel that can accommodate two ligand molecules. Interacts with RBP4. Post-translationally, sulfonation of the reactive cysteine Cys-30 enhances the stability of the native conformation of TTR, avoiding misassembly of the protein leading to amyloid formation. Detected in liver.

It localises to the secreted. In terms of biological role, thyroid hormone-binding protein. Probably transports thyroxine from the bloodstream to the brain. This Pongo abelii (Sumatran orangutan) protein is Transthyretin (TTR).